We begin with the raw amino-acid sequence, 110 residues long: Phosphoribosyl-ATP pyrophosphatase (110 aa).

This sequence belongs to the PRA-PH family.

Its subcellular location is the cytoplasm. It carries out the reaction 1-(5-phospho-beta-D-ribosyl)-ATP + H2O = 1-(5-phospho-beta-D-ribosyl)-5'-AMP + diphosphate + H(+). The protein operates within amino-acid biosynthesis; L-histidine biosynthesis; L-histidine from 5-phospho-alpha-D-ribose 1-diphosphate: step 2/9. The sequence is that of Phosphoribosyl-ATP pyrophosphatase from Clostridium botulinum (strain Kyoto / Type A2).